Reading from the N-terminus, the 451-residue chain is Serine--tRNA ligase, cytoplasmic (451 aa).

A disulfide bond links Cys213 and Cys244. 238-240 (TAE) contacts L-serine. ATP contacts are provided by residues 269-271 (RKE) and Val285. Glu292 contacts L-serine. Position 358 to 361 (358 to 361 (ELVS)) interacts with ATP. Thr396 is a binding site for L-serine.

It belongs to the class-II aminoacyl-tRNA synthetase family. Type-1 seryl-tRNA synthetase subfamily. Homodimer. The tRNA molecule binds across the dimer.

The protein resides in the cytoplasm. The protein localises to the cytosol. The catalysed reaction is tRNA(Ser) + L-serine + ATP = L-seryl-tRNA(Ser) + AMP + diphosphate + H(+). Catalyzes the attachment of serine to tRNA(Ser) in a two-step reaction: serine is first activated by ATP to form Ser-AMP and then transferred to the acceptor end of tRNA(Ser). The sequence is that of Serine--tRNA ligase, cytoplasmic from Arabidopsis thaliana (Mouse-ear cress).